The following is an 87-amino-acid chain: MRKGSVKEVLAKLKYDPREDERDYYIIIEHRGAYGDVKKIPVELIELGHGYFFVGDAQIPYHRIRRVVKKDGKVIWETRKDRRGESD.

Belongs to the UPF0248 family.

This chain is UPF0248 protein TON_0940, found in Thermococcus onnurineus (strain NA1).